The primary structure comprises 195 residues: VAPTGSVETEKAGPSYKPKEYYKVTEAILRLLLLASLVVAVVVMVTSKETELISVKLDPFPPFMLPLTAKFTQSPAFIYFVAGLSVAGLYTIISTLASFYNLLIKPGFCPALVSHFIILDVVMLGIVGTATGAAGGVAYIGLKGNSHVGWTKVCNKYGKLCTHLGASLAVSFFAFIVLLLLIILSIHSLSKKIPK.

At 1–26 (VAPTGSVETEKAGPSYKPKEYYKVTE) the chain is on the cytoplasmic side. A helical membrane pass occupies residues 27-47 (AILRLLLLASLVVAVVVMVTS). Topologically, residues 48–75 (KETELISVKLDPFPPFMLPLTAKFTQSP) are extracellular. The chain crosses the membrane as a helical span at residues 76–96 (AFIYFVAGLSVAGLYTIISTL). At 97–120 (ASFYNLLIKPGFCPALVSHFIILD) the chain is on the cytoplasmic side. A helical membrane pass occupies residues 121–143 (VVMLGIVGTATGAAGGVAYIGLK). Topologically, residues 144-163 (GNSHVGWTKVCNKYGKLCTH) are extracellular. The helical transmembrane segment at 164–184 (LGASLAVSFFAFIVLLLLIIL) threads the bilayer. Topologically, residues 185-195 (SIHSLSKKIPK) are cytoplasmic.

This sequence belongs to the Casparian strip membrane proteins (CASP) family. As to quaternary structure, homodimer and heterodimers.

It is found in the cell membrane. The chain is CASP-like protein IN26 (IN26) from Ipomoea nil (Japanese morning glory).